The sequence spans 502 residues: ATP synthase subunit alpha (502 aa).

169 to 176 (GDRQTGKT) contributes to the ATP binding site.

This sequence belongs to the ATPase alpha/beta chains family. As to quaternary structure, F-type ATPases have 2 components, CF(1) - the catalytic core - and CF(0) - the membrane proton channel. CF(1) has five subunits: alpha(3), beta(3), gamma(1), delta(1), epsilon(1). CF(0) has three main subunits: a(1), b(2) and c(9-12). The alpha and beta chains form an alternating ring which encloses part of the gamma chain. CF(1) is attached to CF(0) by a central stalk formed by the gamma and epsilon chains, while a peripheral stalk is formed by the delta and b chains.

Its subcellular location is the cell membrane. It carries out the reaction ATP + H2O + 4 H(+)(in) = ADP + phosphate + 5 H(+)(out). In terms of biological role, produces ATP from ADP in the presence of a proton gradient across the membrane. The alpha chain is a regulatory subunit. The sequence is that of ATP synthase subunit alpha from Bacillus velezensis (strain DSM 23117 / BGSC 10A6 / LMG 26770 / FZB42) (Bacillus amyloliquefaciens subsp. plantarum).